The chain runs to 763 residues: Phosphoglycerol transferase I (763 aa).

4 helical membrane passes run 1–21 (MSEL…AWKA), 26–46 (WWFA…ITLY), 77–97 (ILPG…LGWI), and 108–128 (VGYS…SPAF).

Belongs to the OpgB family.

The protein localises to the cell inner membrane. It carries out the reaction a phosphatidylglycerol + a membrane-derived-oligosaccharide D-glucose = a 1,2-diacyl-sn-glycerol + a membrane-derived-oligosaccharide 6-(glycerophospho)-D-glucose.. Its pathway is glycan metabolism; osmoregulated periplasmic glucan (OPG) biosynthesis. Functionally, transfers a phosphoglycerol residue from phosphatidylglycerol to the membrane-bound nascent glucan backbones. The polypeptide is Phosphoglycerol transferase I (Salmonella agona (strain SL483)).